A 132-amino-acid chain; its full sequence is MHSTIAYVSLLPLALFVAMHGASTDEESEELGASTDVDYEELDANCTCPAPALTSTRNNKHYPLGCIYNCSSYNCTIPDGTPCYVLTLGEVKEHLQIGSTVPNCTCGLCRNGTCVSNGTVEECFAVEEIEET.

The first 24 residues, 1 to 24 (MHSTIAYVSLLPLALFVAMHGAST), serve as a signal peptide directing secretion. 6 N-linked (GlcNAc...) asparagine glycosylation sites follow: asparagine 45, asparagine 69, asparagine 74, asparagine 103, asparagine 111, and asparagine 117. 4 cysteine pairs are disulfide-bonded: cysteine 48–cysteine 70, cysteine 66–cysteine 109, cysteine 83–cysteine 114, and cysteine 104–cysteine 123.

It localises to the secreted. Salivary chemokine-binding protein which binds to host chemokine CCL5. In Amblyomma parvum (South American tick), this protein is Evasin P985.